The sequence spans 475 residues: Ribulose bisphosphate carboxylase large chain (475 aa).

A propeptide spanning residues Met-1 to Ser-2 is cleaved from the precursor. Pro-3 is subject to N-acetylproline. Lys-14 is modified (N6,N6,N6-trimethyllysine). The substrate site is built by Asn-123 and Thr-173. Lys-175 functions as the Proton acceptor in the catalytic mechanism. Lys-177 is a substrate binding site. Mg(2+)-binding residues include Lys-201, Asp-203, and Glu-204. N6-carboxylysine is present on Lys-201. His-294 serves as the catalytic Proton acceptor. Arg-295, His-327, and Ser-379 together coordinate substrate.

Belongs to the RuBisCO large chain family. Type I subfamily. In terms of assembly, heterohexadecamer of 8 large chains and 8 small chains; disulfide-linked. The disulfide link is formed within the large subunit homodimers. Requires Mg(2+) as cofactor. In terms of processing, the disulfide bond which can form in the large chain dimeric partners within the hexadecamer appears to be associated with oxidative stress and protein turnover.

The protein localises to the plastid. It is found in the chloroplast. The catalysed reaction is 2 (2R)-3-phosphoglycerate + 2 H(+) = D-ribulose 1,5-bisphosphate + CO2 + H2O. It catalyses the reaction D-ribulose 1,5-bisphosphate + O2 = 2-phosphoglycolate + (2R)-3-phosphoglycerate + 2 H(+). In terms of biological role, ruBisCO catalyzes two reactions: the carboxylation of D-ribulose 1,5-bisphosphate, the primary event in carbon dioxide fixation, as well as the oxidative fragmentation of the pentose substrate in the photorespiration process. Both reactions occur simultaneously and in competition at the same active site. In Gossypium hirsutum (Upland cotton), this protein is Ribulose bisphosphate carboxylase large chain.